The following is a 214-amino-acid chain: ATP phosphoribosyltransferase (214 aa).

Belongs to the ATP phosphoribosyltransferase family. Short subfamily. As to quaternary structure, heteromultimer composed of HisG and HisZ subunits.

The protein localises to the cytoplasm. It catalyses the reaction 1-(5-phospho-beta-D-ribosyl)-ATP + diphosphate = 5-phospho-alpha-D-ribose 1-diphosphate + ATP. It participates in amino-acid biosynthesis; L-histidine biosynthesis; L-histidine from 5-phospho-alpha-D-ribose 1-diphosphate: step 1/9. Functionally, catalyzes the condensation of ATP and 5-phosphoribose 1-diphosphate to form N'-(5'-phosphoribosyl)-ATP (PR-ATP). Has a crucial role in the pathway because the rate of histidine biosynthesis seems to be controlled primarily by regulation of HisG enzymatic activity. This is ATP phosphoribosyltransferase from Streptococcus sanguinis (strain SK36).